The following is a 395-amino-acid chain: NAD(P)H-quinone oxidoreductase subunit H (395 aa).

Belongs to the complex I 49 kDa subunit family. NDH-1 can be composed of about 15 different subunits; different subcomplexes with different compositions have been identified which probably have different functions.

It is found in the cellular thylakoid membrane. It catalyses the reaction a plastoquinone + NADH + (n+1) H(+)(in) = a plastoquinol + NAD(+) + n H(+)(out). The enzyme catalyses a plastoquinone + NADPH + (n+1) H(+)(in) = a plastoquinol + NADP(+) + n H(+)(out). Functionally, NDH-1 shuttles electrons from an unknown electron donor, via FMN and iron-sulfur (Fe-S) centers, to quinones in the respiratory and/or the photosynthetic chain. The immediate electron acceptor for the enzyme in this species is believed to be plastoquinone. Couples the redox reaction to proton translocation, and thus conserves the redox energy in a proton gradient. Cyanobacterial NDH-1 also plays a role in inorganic carbon-concentration. The sequence is that of NAD(P)H-quinone oxidoreductase subunit H from Prochlorococcus marinus (strain MIT 9515).